The chain runs to 180 residues: Large ribosomal subunit protein uL6c (180 aa).

It belongs to the universal ribosomal protein uL6 family. As to quaternary structure, part of the 50S ribosomal subunit.

The protein localises to the plastid. Its subcellular location is the chloroplast. Functionally, binds 23S rRNA. The polypeptide is Large ribosomal subunit protein uL6c (rpl6) (Pyropia yezoensis (Susabi-nori)).